Here is a 498-residue protein sequence, read N- to C-terminus: TORTIFOLIA1-like protein 5 (498 aa).

HEAT repeat units follow at residues 56-93 (ETFS…SHGD), 97-134 (PHLS…NITG), 136-173 (PFSI…AADE), 177-214 (EQLQ…AVGG), and 219-257 (KAVL…VEEE). The disordered stretch occupies residues 296-423 (EGDSTEVSES…SSSQAKSNAE (128 aa)). Low complexity predominate over residues 300–322 (TEVSESSSSSKSASSGLSATSGK). Residues 343 to 366 (NDVEPLDRGDTPKDVEQEAVVSKE) are compositionally biased toward basic and acidic residues. The span at 390-400 (NGSNKSQVVQS) shows a compositional bias: polar residues. Phosphoserine is present on Ser426.

The sequence is that of TORTIFOLIA1-like protein 5 from Arabidopsis thaliana (Mouse-ear cress).